A 1113-amino-acid polypeptide reads, in one-letter code: MGSRSFTRALALAFNEWLLMFMLFVNSIFSYVIARFADYSELQSPCLMCSNLDHILRRTKDLKKTHWDIICSKHKSEISSLVYCHAHGKLVDVRGMCETCLFSFATTNKSNAETYRLLVGKLGEDSHFGSKSDRSKYPNCSKLTDCTCCNQLWTPQTAATQVAEREILPKIGLLGKIRTGKQSAPKKSVSFNHLPDVGYTELKIHSDTESEAVFSDTEPKQESSLNHLPPVGYNEPKIGLVGDVRTGKPSTPKKSVSFNHLPDVGYTELKIHSDTESEAVFSEDECVVLKDEDHKYQIVDLQTHPIITLPYDLATDKLLNFDFPLEPFVTRNDREEVQLQETNWRTYSSFPVLIPVNDVPETSEKVFKEEEINSLDNLFLTSRAMKHFAAAKVKEEPIRLQDISSTPDVKENPANASLMEETELICLSDVTATSGAMEHSEVILKEREELIHLQDISVTPDFKENPANASLLEETELICLNDVTSPLRAVEHSAVLLKDKVEPIRLQDGGSLTPDFMENSANASILEETELICVNDVTSTSRTMGHSSVVLKENEEPIRFQDSSLTPDFKENPASTFLVEETELICLNDVTSPSRAMEHSTVFIEEKEELVRHQNITLTQDFMENPANSSLREETELICLNDVTSTSEVAETPEDVLEGIELMSIHDISLDEVSESVTTNQTSVEISKERDTDQADITSLESEYIVVPSPNSMPENSTDNCVSDKKEMKETSLRISSLSEMAPRDVTSHTEAALESESSSFNSMSVAAETNQYSGELLDLADAYNIVVGNEGHYDSNGRQQIENWMKKDTSRVSEDLKALLTQISASRGIEFLSPRDVSPKISVNSSDQETKNLDHDMQLLLQKRMLERNESNLSLEGVSVTEIEGESEGDRLKRQVDYDRKLLTGLYKELEEERSASAVATNQAMAMITRLQEEKASFQMEALQNLRMMEEQAEYDMEAIQRLNDLLVEREKLIQDLEAEIEYFRDQTPQKKNKLDVAEKVTEMDSPSEGMSNKIQSCLVGFDEERLYITSCLEKIENRVNGKAHDDNLPAQESVSELHERVERLKGDLYFLEQVMNSLGHGNEGVQFVKEIASHLQTLRSLSMKRQDQTEC.

Residues 12 to 34 (LAFNEWLLMFMLFVNSIFSYVIA) form a helical membrane-spanning segment. Residues 209–229 (ESEAVFSDTEPKQESSLNHLP) are disordered. The GTD-binding domain maps to 888–986 (SEGDRLKRQV…DLEAEIEYFR (99 aa)).

Interacts with myosin XI-K, XI-I and XI-1. As to expression, expressed in leaf epidermal cells, roots and root hairs.

It is found in the endomembrane system. Its function is as follows. Membrane-anchored myosin receptors that define a distinct, plant-specific transport vesicle compartment. The protein is Myosin-binding protein 1 of Arabidopsis thaliana (Mouse-ear cress).